Here is a 27-residue protein sequence, read N- to C-terminus: Vasotocin-neurophysin VT (27 aa).

A disulfide bridge links Cys-1 with Cys-6. Residue Gly-9 is modified to Glycine amide.

This sequence belongs to the vasopressin/oxytocin family.

Vasotocin is an antidiuretic hormone. This Sclerophrys regularis (Common African toad) protein is Vasotocin-neurophysin VT.